The chain runs to 377 residues: UPF0754 membrane protein RBAM_010020 (377 aa).

2 helical membrane passes run 1 to 21 and 357 to 377; these read MGIA…GAVT and YLGG…VILF.

Belongs to the UPF0754 family.

The protein localises to the cell membrane. The chain is UPF0754 membrane protein RBAM_010020 from Bacillus velezensis (strain DSM 23117 / BGSC 10A6 / LMG 26770 / FZB42) (Bacillus amyloliquefaciens subsp. plantarum).